The sequence spans 545 residues: CTP synthase (545 aa).

Residues 1 to 265 (MSKYIFVTGG…LVPIAKQLDL (265 aa)) are amidoligase domain. Residue Ser13 participates in CTP binding. A UTP-binding site is contributed by Ser13. Residues 14-19 (SLGKGI) and Asp71 each bind ATP. 2 residues coordinate Mg(2+): Asp71 and Glu139. CTP is bound by residues 146-148 (DIE), 186-191 (KTKPTQ), and Lys222. UTP-binding positions include 186–191 (KTKPTQ) and Lys222. The 255-residue stretch at 290 to 544 (KIAFVGKYLQ…VENAYKCQRS (255 aa)) folds into the Glutamine amidotransferase type-1 domain. Gly355 lines the L-glutamine pocket. Cys382 serves as the catalytic Nucleophile; for glutamine hydrolysis. L-glutamine-binding positions include 383–386 (LGMQ), Glu406, and Arg473. Active-site residues include His517 and Glu519.

This sequence belongs to the CTP synthase family. As to quaternary structure, homotetramer.

It carries out the reaction UTP + L-glutamine + ATP + H2O = CTP + L-glutamate + ADP + phosphate + 2 H(+). The enzyme catalyses L-glutamine + H2O = L-glutamate + NH4(+). It catalyses the reaction UTP + NH4(+) + ATP = CTP + ADP + phosphate + 2 H(+). The protein operates within pyrimidine metabolism; CTP biosynthesis via de novo pathway; CTP from UDP: step 2/2. Allosterically activated by GTP, when glutamine is the substrate; GTP has no effect on the reaction when ammonia is the substrate. The allosteric effector GTP functions by stabilizing the protein conformation that binds the tetrahedral intermediate(s) formed during glutamine hydrolysis. Inhibited by the product CTP, via allosteric rather than competitive inhibition. In terms of biological role, catalyzes the ATP-dependent amination of UTP to CTP with either L-glutamine or ammonia as the source of nitrogen. Regulates intracellular CTP levels through interactions with the four ribonucleotide triphosphates. This chain is CTP synthase, found in Nautilia profundicola (strain ATCC BAA-1463 / DSM 18972 / AmH).